The primary structure comprises 108 residues: DNA-directed RNA polymerase subunit omega (108 aa).

The tract at residues 1–32 (MTNSQSDAALAAVPDRFDPSAGGPGAYDTPLG) is disordered.

Belongs to the RNA polymerase subunit omega family. The RNAP catalytic core consists of 2 alpha, 1 beta, 1 beta' and 1 omega subunit. When a sigma factor is associated with the core the holoenzyme is formed, which can initiate transcription.

It carries out the reaction RNA(n) + a ribonucleoside 5'-triphosphate = RNA(n+1) + diphosphate. Its function is as follows. Promotes RNA polymerase assembly. Latches the N- and C-terminal regions of the beta' subunit thereby facilitating its interaction with the beta and alpha subunits. This Mycobacterium avium (strain 104) protein is DNA-directed RNA polymerase subunit omega.